A 419-amino-acid polypeptide reads, in one-letter code: Chaperone protein dnaJ 2 (419 aa).

One can recognise a J domain in the interval 14 to 75; sequence KFYEILGVPK…EKREIYDQYG (62 aa). The CR-type zinc-finger motif lies at 136–220; it reads GTTKKLSLSR…CKGEKVVSEK (85 aa). The Zn(2+) site is built by Cys-149, Cys-152, Cys-165, Cys-168, Cys-192, Cys-195, Cys-208, and Cys-211. CXXCXGXG motif repeat units follow at residues 149-156, 165-172, 192-199, and 208-215; these read CSKCNGKG, CGGCQGSG, CNDCKGTG, and CPQCKGEK. Residues 378–391 show a composition bias toward basic and acidic residues; that stretch reads TTLHDVNIEDEMKR. A disordered region spans residues 378–419; the sequence is TTLHDVNIEDEMKRKAQAQREAYDDDEEDHPGGAQRVQCAQQ. Residue Cys-416 is modified to Cysteine methyl ester. Cys-416 is lipidated: S-farnesyl cysteine. Residues 417-419 constitute a propeptide, removed in mature form; that stretch reads AQQ.

It belongs to the DnaJ family. A/I subfamily. In terms of assembly, homodimer. The cofactor is Zn(2+). In terms of processing, farnesylated. Expressed in both etiolated and light-grown tissues.

Its subcellular location is the membrane. Plays a continuous role in plant development probably in the structural organization of compartments. This Arabidopsis thaliana (Mouse-ear cress) protein is Chaperone protein dnaJ 2 (ATJ2).